A 129-amino-acid chain; its full sequence is Small ribosomal subunit protein uS8 (129 aa).

The protein belongs to the universal ribosomal protein uS8 family. Part of the 30S ribosomal subunit. Contacts proteins S5 and S12.

In terms of biological role, one of the primary rRNA binding proteins, it binds directly to 16S rRNA central domain where it helps coordinate assembly of the platform of the 30S subunit. The protein is Small ribosomal subunit protein uS8 of Legionella pneumophila (strain Corby).